The chain runs to 684 residues: Glycine--tRNA ligase beta subunit (684 aa).

The protein belongs to the class-II aminoacyl-tRNA synthetase family. In terms of assembly, tetramer of two alpha and two beta subunits.

The protein resides in the cytoplasm. It carries out the reaction tRNA(Gly) + glycine + ATP = glycyl-tRNA(Gly) + AMP + diphosphate. The protein is Glycine--tRNA ligase beta subunit of Pseudomonas entomophila (strain L48).